We begin with the raw amino-acid sequence, 96 residues long: MGIVFTNHNIDLLSVEFDEITKNCNYTFSVDGETAIFTARISIIRNIKGIKYSEELDKFIMSIMPLQPKVSKILGGVTWDCICGKEVGFPVRLIGK.

The polypeptide is Cysteine protease immunity 1 (Escherichia coli O1:K1:H7 (strain ATCC 11775 / DSM 30083 / JCM 1649 / NBRC 102203 / NCTC 9001 / U5/41)).